The chain runs to 220 residues: Ribose-5-phosphate isomerase A (220 aa).

Residues 25 to 28 (TGST), 80 to 83 (DGAD), and 93 to 96 (KGGG) contribute to the substrate site. E102 serves as the catalytic Proton acceptor. A substrate-binding site is contributed by K120.

It belongs to the ribose 5-phosphate isomerase family. In terms of assembly, homodimer.

The enzyme catalyses aldehydo-D-ribose 5-phosphate = D-ribulose 5-phosphate. It participates in carbohydrate degradation; pentose phosphate pathway; D-ribose 5-phosphate from D-ribulose 5-phosphate (non-oxidative stage): step 1/1. Functionally, catalyzes the reversible conversion of ribose-5-phosphate to ribulose 5-phosphate. This is Ribose-5-phosphate isomerase A from Bacillus cereus (strain ATCC 14579 / DSM 31 / CCUG 7414 / JCM 2152 / NBRC 15305 / NCIMB 9373 / NCTC 2599 / NRRL B-3711).